Here is a 309-residue protein sequence, read N- to C-terminus: 4-hydroxy-tetrahydrodipicolinate synthase (309 aa).

Thr51 lines the pyruvate pocket. Catalysis depends on Tyr140, which acts as the Proton donor/acceptor. Lys168 serves as the catalytic Schiff-base intermediate with substrate. Residue Ile209 coordinates pyruvate.

Belongs to the DapA family. Homotetramer; dimer of dimers.

The protein localises to the cytoplasm. The catalysed reaction is L-aspartate 4-semialdehyde + pyruvate = (2S,4S)-4-hydroxy-2,3,4,5-tetrahydrodipicolinate + H2O + H(+). It functions in the pathway amino-acid biosynthesis; L-lysine biosynthesis via DAP pathway; (S)-tetrahydrodipicolinate from L-aspartate: step 3/4. Its function is as follows. Catalyzes the condensation of (S)-aspartate-beta-semialdehyde [(S)-ASA] and pyruvate to 4-hydroxy-tetrahydrodipicolinate (HTPA). The chain is 4-hydroxy-tetrahydrodipicolinate synthase from Streptococcus uberis (strain ATCC BAA-854 / 0140J).